Reading from the N-terminus, the 160-residue chain is Endoribonuclease YbeY (160 aa).

Histidine 121, histidine 125, and histidine 131 together coordinate Zn(2+).

This sequence belongs to the endoribonuclease YbeY family. It depends on Zn(2+) as a cofactor.

It is found in the cytoplasm. Single strand-specific metallo-endoribonuclease involved in late-stage 70S ribosome quality control and in maturation of the 3' terminus of the 16S rRNA. This chain is Endoribonuclease YbeY, found in Syntrophus aciditrophicus (strain SB).